Here is a 170-residue protein sequence, read N- to C-terminus: Cyclic pyranopterin monophosphate synthase 1 (170 aa).

Substrate is bound by residues 79-81 (LCH) and 116-117 (ME). D131 is a catalytic residue.

The protein belongs to the MoaC family. As to quaternary structure, homohexamer; trimer of dimers.

It carries out the reaction (8S)-3',8-cyclo-7,8-dihydroguanosine 5'-triphosphate = cyclic pyranopterin phosphate + diphosphate. It participates in cofactor biosynthesis; molybdopterin biosynthesis. Catalyzes the conversion of (8S)-3',8-cyclo-7,8-dihydroguanosine 5'-triphosphate to cyclic pyranopterin monophosphate (cPMP). The chain is Cyclic pyranopterin monophosphate synthase 1 (moaC1) from Mycobacterium bovis (strain ATCC BAA-935 / AF2122/97).